The following is a 62-amino-acid chain: MARKCVITGRKSRSGNSRSHAMNASKRTWGANVQKVRILVNGKPKKVYVSARALKSGKVERV.

Positions 1 to 28 are disordered; the sequence is MARKCVITGRKSRSGNSRSHAMNASKRT. Residues 14–26 show a composition bias toward polar residues; it reads SGNSRSHAMNASK.

This sequence belongs to the bacterial ribosomal protein bL28 family.

This is Large ribosomal subunit protein bL28 from Bacillus licheniformis (strain ATCC 14580 / DSM 13 / JCM 2505 / CCUG 7422 / NBRC 12200 / NCIMB 9375 / NCTC 10341 / NRRL NRS-1264 / Gibson 46).